A 656-amino-acid polypeptide reads, in one-letter code: Hemocyanin subunit A (656 aa).

The N-terminal stretch at 1–18 (MWSLALATLFVLGTVIRA) is a signal peptide. His-197, His-201, and His-227 together coordinate Cu cation. Asn-313 carries an N-linked (GlcNAc...) asparagine glycan. The Cu cation site is built by His-348, His-352, and His-388. Cys-558 and Cys-606 form a disulfide bridge.

This sequence belongs to the tyrosinase family. Hemocyanin subfamily. In terms of assembly, 36-chain polymer consisting of 6 hexamers, each of which includes 4 different chains, A, B, C and D. In terms of tissue distribution, hemolymph.

It localises to the secreted. The protein localises to the extracellular space. Its function is as follows. Hemocyanins are copper-containing oxygen carriers occurring freely dissolved in the hemolymph of many mollusks and arthropods. In Scutigera coleoptrata (House centipede), this protein is Hemocyanin subunit A (HCA).